Here is a 100-residue protein sequence, read N- to C-terminus: NADH-quinone oxidoreductase subunit K (100 aa).

3 consecutive transmembrane segments (helical) span residues 4-24 (LSNYLIVSAVLFSIGTIGVLT), 29-49 (IVVFMCIELMLNAVNLTFVAF), and 60-80 (IFVFFIMTVAAAEAAVGLALF).

The protein belongs to the complex I subunit 4L family. NDH-1 is composed of 14 different subunits. Subunits NuoA, H, J, K, L, M, N constitute the membrane sector of the complex.

The protein localises to the cell inner membrane. The enzyme catalyses a quinone + NADH + 5 H(+)(in) = a quinol + NAD(+) + 4 H(+)(out). Its function is as follows. NDH-1 shuttles electrons from NADH, via FMN and iron-sulfur (Fe-S) centers, to quinones in the respiratory chain. The immediate electron acceptor for the enzyme in this species is believed to be ubiquinone. Couples the redox reaction to proton translocation (for every two electrons transferred, four hydrogen ions are translocated across the cytoplasmic membrane), and thus conserves the redox energy in a proton gradient. The protein is NADH-quinone oxidoreductase subunit K of Trichlorobacter lovleyi (strain ATCC BAA-1151 / DSM 17278 / SZ) (Geobacter lovleyi).